We begin with the raw amino-acid sequence, 270 residues long: Formamidopyrimidine-DNA glycosylase (270 aa).

Proline 2 serves as the catalytic Schiff-base intermediate with DNA. The active-site Proton donor is the glutamate 3. The active-site Proton donor; for beta-elimination activity is the lysine 58. 3 residues coordinate DNA: histidine 91, arginine 110, and arginine 151. The FPG-type zinc finger occupies 236–270 (FAYGRAGEFCKVCGTTLREVKLGQRASVYCPRCQR). Arginine 260 (proton donor; for delta-elimination activity) is an active-site residue.

Belongs to the FPG family. In terms of assembly, monomer. Zn(2+) is required as a cofactor.

The catalysed reaction is Hydrolysis of DNA containing ring-opened 7-methylguanine residues, releasing 2,6-diamino-4-hydroxy-5-(N-methyl)formamidopyrimidine.. It carries out the reaction 2'-deoxyribonucleotide-(2'-deoxyribose 5'-phosphate)-2'-deoxyribonucleotide-DNA = a 3'-end 2'-deoxyribonucleotide-(2,3-dehydro-2,3-deoxyribose 5'-phosphate)-DNA + a 5'-end 5'-phospho-2'-deoxyribonucleoside-DNA + H(+). Its function is as follows. Involved in base excision repair of DNA damaged by oxidation or by mutagenic agents. Acts as a DNA glycosylase that recognizes and removes damaged bases. Has a preference for oxidized purines, such as 7,8-dihydro-8-oxoguanine (8-oxoG). Has AP (apurinic/apyrimidinic) lyase activity and introduces nicks in the DNA strand. Cleaves the DNA backbone by beta-delta elimination to generate a single-strand break at the site of the removed base with both 3'- and 5'-phosphates. The protein is Formamidopyrimidine-DNA glycosylase of Ectopseudomonas mendocina (strain ymp) (Pseudomonas mendocina).